The sequence spans 173 residues: Mediator of RNA polymerase II transcription subunit 10 (173 aa).

The span at 1-10 (MVQQQQQSQQ) shows a compositional bias: low complexity. Residues 1–42 (MVQQQQQSQQRMMELHERNDREKLARKTEKEREEERRKQEDD) are disordered. Basic and acidic residues predominate over residues 13–42 (MELHERNDREKLARKTEKEREEERRKQEDD).

This sequence belongs to the Mediator complex subunit 10 family. As to quaternary structure, component of the Mediator complex.

The protein localises to the nucleus. Component of the Mediator complex, a coactivator involved in the regulated transcription of nearly all RNA polymerase II-dependent genes. Mediator functions as a bridge to convey information from gene-specific regulatory proteins to the basal RNA polymerase II transcription machinery. Mediator is recruited to promoters by direct interactions with regulatory proteins and serves as a scaffold for the assembly of a functional preinitiation complex with RNA polymerase II and the general transcription factors. Required for germ cell development and for transcriptional activation of certain stage-specific inducible promoters. In Caenorhabditis elegans, this protein is Mediator of RNA polymerase II transcription subunit 10 (mdt-10).